Reading from the N-terminus, the 714-residue chain is Protein HAPLESS 2-B (714 aa).

The signal sequence occupies residues 1-33; sequence MAPRRRRRAARSSRPLLLALLAAAVNNFAPAGG. The Extracellular portion of the chain corresponds to 34–552; that stretch reads VEVLAKSRLE…FFTGTTCSTR (519 aa). 7 disulfides stabilise this stretch: Cys45–Cys59, Cys134–Cys164, Cys146–Cys194, Cys165–Cys321, Cys167–Cys177, Cys304–Cys328, and Cys441–Cys479. The helical transmembrane segment at 553–573 threads the bilayer; sequence CWSFLKFVIHGLLLVAVLWLL. Topologically, residues 574 to 714 are cytoplasmic; it reads HRKGLFDPLY…HGDRRHHAWH (141 aa). Residues 597–619 are disordered; sequence RARRRHKRAHSHRHSHHHDAHKR. The span at 598 to 619 shows a compositional bias: basic residues; sequence ARRRHKRAHSHRHSHHHDAHKR.

It belongs to the HAP2/GCS1 family.

The protein resides in the endoplasmic reticulum membrane. It is found in the cell membrane. Functionally, required for male fertility. Plays a role in pollen tube guidance and successful gamete attachment. Essential for the fusion of gametes during double fertilization, where one male gamete fuses with the egg to produce a zygote, and another male gamete fuses with the central cell to produce the endosperm. Mediates the fusion of cell membranes. Not required for pollen tube outgrowth. This chain is Protein HAPLESS 2-B (HAP2B), found in Oryza sativa subsp. japonica (Rice).